A 446-amino-acid chain; its full sequence is Tubulin beta chain (446 aa).

Positions 11, 69, 138, 142, 143, 144, 204, and 226 each coordinate GTP. Glu-69 contacts Mg(2+). The segment at Glu-421–Glu-446 is disordered. A compositionally biased stretch (acidic residues) spans Gly-429–Glu-446.

This sequence belongs to the tubulin family. Dimer of alpha and beta chains. A typical microtubule is a hollow water-filled tube with an outer diameter of 25 nm and an inner diameter of 15 nM. Alpha-beta heterodimers associate head-to-tail to form protofilaments running lengthwise along the microtubule wall with the beta-tubulin subunit facing the microtubule plus end conferring a structural polarity. Microtubules usually have 13 protofilaments but different protofilament numbers can be found in some organisms and specialized cells. The cofactor is Mg(2+).

It localises to the cytoplasm. Its subcellular location is the cytoskeleton. Its function is as follows. Tubulin is the major constituent of microtubules, a cylinder consisting of laterally associated linear protofilaments composed of alpha- and beta-tubulin heterodimers. Microtubules grow by the addition of GTP-tubulin dimers to the microtubule end, where a stabilizing cap forms. Below the cap, tubulin dimers are in GDP-bound state, owing to GTPase activity of alpha-tubulin. The polypeptide is Tubulin beta chain (TUB2) (Fusarium fujikuroi (Bakanae and foot rot disease fungus)).